Reading from the N-terminus, the 439-residue chain is MENQKNFLTTAPYKGTRDFYPEEMRLRNWMFSIMRETVLSFGYEEYDGPILESFDLYKAKSGEEIVERQLYDFIDKGERRVAIRPEMTPTLARMVAGNLRNLPRPVRWFSIPNLWRYEQPGKGRLREHWQLNVDLFGVDTHRAELEILLMADSILKKFGAPTGSYQIKVSHRKLLDSFLKNSLKLSDHQVHGVSKLLDKKSKISPETFEAEIKPLLNNFNEQFSLIETYLASNLETVSTIPGIDPDSIHFIRNLFQELGELGIDKQLVFDPSIIRGFDYYTGCIFEVFDTNPENRRSLYGGGRYDNLIGLFSKEQLSGIGFGLGDVTLKSFLENHNLIPDLSREKTLFLPIMDESIFVDTFKLSKELRENGILTETMLDSAKIGKQIQVAEKKGYRYVLFLGESEIRTETVQIKDLVSGEQKSLPRKGLSDILKKDFRL.

This sequence belongs to the class-II aminoacyl-tRNA synthetase family. As to quaternary structure, homodimer.

It is found in the cytoplasm. It carries out the reaction tRNA(His) + L-histidine + ATP = L-histidyl-tRNA(His) + AMP + diphosphate + H(+). This is Histidine--tRNA ligase from Leptospira borgpetersenii serovar Hardjo-bovis (strain L550).